The following is a 425-amino-acid chain: Serine--tRNA ligase (425 aa).

230 to 232 (TAE) contributes to the L-serine binding site. Position 261–263 (261–263 (RSE)) interacts with ATP. Residue Glu284 coordinates L-serine. 348-351 (EISS) serves as a coordination point for ATP. Ser384 provides a ligand contact to L-serine.

It belongs to the class-II aminoacyl-tRNA synthetase family. Type-1 seryl-tRNA synthetase subfamily. Homodimer. The tRNA molecule binds across the dimer.

It localises to the cytoplasm. The enzyme catalyses tRNA(Ser) + L-serine + ATP = L-seryl-tRNA(Ser) + AMP + diphosphate + H(+). It catalyses the reaction tRNA(Sec) + L-serine + ATP = L-seryl-tRNA(Sec) + AMP + diphosphate + H(+). It functions in the pathway aminoacyl-tRNA biosynthesis; selenocysteinyl-tRNA(Sec) biosynthesis; L-seryl-tRNA(Sec) from L-serine and tRNA(Sec): step 1/1. In terms of biological role, catalyzes the attachment of serine to tRNA(Ser). Is also able to aminoacylate tRNA(Sec) with serine, to form the misacylated tRNA L-seryl-tRNA(Sec), which will be further converted into selenocysteinyl-tRNA(Sec). The polypeptide is Serine--tRNA ligase (Streptococcus agalactiae serotype Ia (strain ATCC 27591 / A909 / CDC SS700)).